Here is a 507-residue protein sequence, read N- to C-terminus: Beta-glucosidase 12 (507 aa).

An N-terminal signal peptide occupies residues 1-22 (MRTIYLSLLVFIIVLALNEVMA). Residue Gln50 coordinates a beta-D-glucoside. N-linked (GlcNAc...) asparagine glycosylation is present at Asn81. A beta-D-glucoside is bound by residues His154 and 199-200 (NE). Residue Glu200 is the Proton donor of the active site. Cys219 and Cys227 form a disulfide bridge. Asn226 is a glycosylation site (N-linked (GlcNAc...) asparagine). An a beta-D-glucoside-binding site is contributed by Tyr344. Residue Asn358 is glycosylated (N-linked (GlcNAc...) asparagine). A beta-D-glucoside-binding positions include Glu414, Trp459, 466-467 (EW), and Phe475. Glu414 acts as the Nucleophile in catalysis.

The protein belongs to the glycosyl hydrolase 1 family.

It carries out the reaction Hydrolysis of terminal, non-reducing beta-D-glucosyl residues with release of beta-D-glucose.. The protein is Beta-glucosidase 12 of Arabidopsis thaliana (Mouse-ear cress).